The following is a 411-amino-acid chain: Class E basic helix-loop-helix protein 40 (411 aa).

Positions 1–20 (MERIPSAQPPPTCLPKAPGL) are disordered. The segment at 1–139 (MERIPSAQPP…LSGRNLEAGQ (139 aa)) is essential for interaction with BMAL1, E-box binding and repressor activity against the CLOCK-BMAL1 heterodimer. Positions 52–107 (TYKLPHRLIEKKRRDRINECIAQLKDLLPEHLKLTTLGHLEKAVVLELTLKHVKAL) constitute a bHLH domain. Residues 75-79 (LKDLL) form a necessary for interaction with RXRA and repressor activity against RXRA region. The Orange domain occupies 142–175 (FCSGFQTCAREVLQYLAKHENTRDLKSSQLVTHL). Lys159 is covalently cross-linked (Glycyl lysine isopeptide (Lys-Gly) (interchain with G-Cter in SUMO1, SUMO2 and SUMO3)). Lys167 is covalently cross-linked (Glycyl lysine isopeptide (Lys-Gly) (interchain with G-Cter in SUMO2)). The disordered stretch occupies residues 227 to 294 (FAPSGGEQSG…PPTKKSRMQL (68 aa)). The residue at position 235 (Ser235) is a Phosphoserine. The segment covering 248–271 (ELEKGDLRSEQPYFKSDHGRRFAV) has biased composition (basic and acidic residues). Residue Lys279 forms a Glycyl lysine isopeptide (Lys-Gly) (interchain with G-Cter in SUMO1); alternate linkage. Residue Lys279 forms a Glycyl lysine isopeptide (Lys-Gly) (interchain with G-Cter in SUMO1, SUMO2 and SUMO3); alternate linkage. Lys279 is covalently cross-linked (Glycyl lysine isopeptide (Lys-Gly) (interchain with G-Cter in SUMO2); alternate). A Glycyl lysine isopeptide (Lys-Gly) (interchain with G-Cter in SUMO2) cross-link involves residue Lys288. Phosphoserine is present on Ser383.

Homodimer. Heterodimer with BHLHE41/DEC2. Interacts with ubiquitin-conjugating enzyme UBE2I/UBC9. Interacts with HDAC1, SUMO1, RXRA and BMAL1. Interacts with TCF3/E47. Ubiquitinated; which may lead to proteasomal degradation. In terms of processing, sumoylation inhibits its ubiquitination and promotes its negative regulation of the CLOCK-BMAL1 heterodimer transcriptional activator activity.

It is found in the cytoplasm. The protein resides in the nucleus. In terms of biological role, transcriptional repressor involved in the regulation of the circadian rhythm by negatively regulating the activity of the clock genes and clock-controlled genes. Acts as the negative limb of a novel autoregulatory feedback loop (DEC loop) which differs from the one formed by the PER and CRY transcriptional repressors (PER/CRY loop). Both these loops are interlocked as it represses the expression of PER1/2 and in turn is repressed by PER1/2 and CRY1/2. Represses the activity of the circadian transcriptional activator: CLOCK-BMAL1|BMAL2 heterodimer by competing for the binding to E-box elements (5'-CACGTG-3') found within the promoters of its target genes. Negatively regulates its own expression and the expression of DBP and BHLHE41/DEC2. Acts as a corepressor of RXR and the RXR-LXR heterodimers and represses the ligand-induced RXRA and NR1H3/LXRA transactivation activity. May function as a transcriptional factor for neuronal differentiation. Represses the transcription of NR0B2 and attentuates the transactivation of NR0B2 by the CLOCK-BMAL1 complex. Drives the circadian rhythm of blood pressure through transcriptional repression of ATP1B1 in the cardiovascular system. The protein is Class E basic helix-loop-helix protein 40 (Bhlhe40) of Mus musculus (Mouse).